The chain runs to 446 residues: Zinc finger protein BALDIBIS (446 aa).

Residues 20–53 (EHIAPNPNPNPNPTSSNSAKRKRNLPGNPDPDAE) are disordered. S58 bears the Phosphoserine mark. C2H2-type zinc fingers lie at residues 68–90 (FICEVCNKGFKRDQNLQLHRRGH) and 110–140 (YICPEKTCVHHDPARALGDLTGIKKHFSRKH). A Nuclear localization signal motif is present at residues 132–139 (IKKHFSRK). The C2H2-type 2; degenerate zinc-finger motif lies at 145–168 (WKCDKCSKKYAVMSDWKAHSKICG). Residues C147, C150, H163, C167, C174, C176, H189, and C193 each coordinate Zn(2+). Residues 172–195 (YRCDCGTLFSRKDSFITHRAFCDA) form a CCHC-type 2; atypical zinc finger. Residues 182–194 (RKDSFITHRAFCD) are SHR-binding. The tract at residues 425–446 (HNLPDSSPPASTDGTPTADMNQ) is disordered. Positions 427–446 (LPDSSPPASTDGTPTADMNQ) are enriched in polar residues.

In terms of assembly, binds to RGA and SCL3 competitively in the nucleus. In terms of tissue distribution, expressed in roots, especially in vascular initials, cortex, endodermis, and quiescent center (QC).

The protein resides in the nucleus. Its function is as follows. Transcription factor that, together with JKD, regulates tissue boundaries and asymmetric cell division in roots by a rapid up-regulation of 'SCARECROW' (SCR), thus controlling the nuclear localization of 'SHORT-ROOT' (SHR) and restricting its action. Confines CYCD6 expression to the cortex-endodermis initial/daughter (CEI/CEID) tissues. Binds DNA via its zinc fingers. Recognizes and binds to SCL3 promoter sequence 5'-AGACAA-3' to promote its expression when in complex with RGA. The polypeptide is Zinc finger protein BALDIBIS (Arabidopsis thaliana (Mouse-ear cress)).